A 205-amino-acid polypeptide reads, in one-letter code: Mitotic spindle assembly checkpoint protein MAD2A (205 aa).

The residue at position 2 (Ala2) is an N-acetylalanine. 6 positions are modified to phosphoserine: Ser6, Ser130, Ser170, Ser178, Ser185, and Ser195. In terms of domain architecture, HORMA spans 14-197 (RGSAEIVAEF…TTIHKVNSMV (184 aa)). A required for assuming the closed conformation and for interaction with CDC20 region spans residues 195-205 (SMVAYKIPVND).

The protein belongs to the MAD2 family. As to quaternary structure, monomer and homodimer. Heterodimerizes with MAD2L1 in order to form a tetrameric MAD1L1-MAD2L1 core complex. In the closed and open conformation, interacts with MAD1L1. Formation of a heterotetrameric core complex containing two molecules each of MAD1L1 and of MAD2L1 promotes binding of another molecule of MAD2L1 to each MAD2L1, resulting in a heterohexamer. Interacts with MAD2L1BP. Interacts with ADAM17/TACE. Interacts with CDC20. Dimeric MAD2L1 in the closed conformation interacts with CDC20. Monomeric MAD2L1 in the open conformation does not interact with CDC20. CDC20 competes with MAD1L1 for MAD2L1 binding. In the closed conformation, interacts with BUB1B. Interacts with TTK. Interacts with TPR. Binds to UBD (via ubiquitin-like 1 domain) during mitosis. Interacts with isoform 1 and isoform 2 of NEK2. Interacts with HSF1; this interaction occurs in mitosis. Interacts with isoform 3 of MAD1L1; this interaction leads to the cytoplasmic sequestration of MAD2L1. Phosphorylated on multiple serine residues. The level of phosphorylation varies during the cell cycle and is highest during mitosis. Phosphorylation abolishes interaction with MAD1L1 and reduces interaction with CDC20. Phosphorylated by NEK2.

It localises to the nucleus. The protein resides in the chromosome. It is found in the centromere. The protein localises to the kinetochore. Its subcellular location is the cytoplasm. It localises to the cytoskeleton. The protein resides in the spindle pole. In terms of biological role, component of the spindle-assembly checkpoint that prevents the onset of anaphase until all chromosomes are properly aligned at the metaphase plate. In the closed conformation (C-MAD2) forms a heterotetrameric complex with MAD1L1 at unattached kinetochores during prometaphase, the complex recruits open conformation molecules of MAD2L1 (O-MAD2) and then promotes the conversion of O-MAD2 to C-MAD2. Required for the execution of the mitotic checkpoint which monitors the process of kinetochore-spindle attachment and inhibits the activity of the anaphase promoting complex by sequestering CDC20 until all chromosomes are aligned at the metaphase plate. The chain is Mitotic spindle assembly checkpoint protein MAD2A (MAD2L1) from Homo sapiens (Human).